A 107-amino-acid chain; its full sequence is Iron-binding protein IscA (107 aa).

Cys-35, Cys-99, and Cys-101 together coordinate Fe cation.

Belongs to the HesB/IscA family. In terms of assembly, homodimer; may form tetramers and higher multimers. Fe cation serves as cofactor.

Its function is as follows. Is able to transfer iron-sulfur clusters to apo-ferredoxin. Multiple cycles of [2Fe2S] cluster formation and transfer are observed, suggesting that IscA acts catalytically. Recruits intracellular free iron so as to provide iron for the assembly of transient iron-sulfur cluster in IscU in the presence of IscS, L-cysteine and the thioredoxin reductase system TrxA/TrxB. The sequence is that of Iron-binding protein IscA from Klebsiella pneumoniae (strain 342).